The primary structure comprises 1327 residues: Myb-like protein O (1327 aa).

The segment covering 131–142 has biased composition (low complexity); that stretch reads NNNINTTNNNNK. Disordered stretches follow at residues 131-153, 263-390, 504-668, and 717-770; these read NNNI…EESN, EEED…DESS, PPQQ…NHES, and KKKK…DNDD. Positions 263 to 283 are enriched in acidic residues; that stretch reads EEEDDEDYIPPEEEEDDDEDN. Positions 322–353 are enriched in low complexity; it reads YNNTANNINNNNIGDESDNNNNNNNNINNNSN. Positions 356–374 are enriched in acidic residues; it reads DDDDDDDDDNNDDDDDDND. Positions 511–532 are enriched in low complexity; sequence SSSSINSSNTMSSSSSSSSLSK. The segment covering 533–542 has biased composition (basic residues); the sequence is NKLKKKKKEE. Residues 543–554 are compositionally biased toward basic and acidic residues; that stretch reads KRKEEKRKEEKR. Positions 555 to 577 are enriched in basic residues; sequence KEKKRKKRQSITISKFKKNKKKT. Over residues 585 to 606 the composition is skewed to acidic residues; that stretch reads SESDSSSDDSDDSDFYYSDIEE. Gly residues predominate over residues 607-619; that stretch reads GGGGNGNGSGSGV. The span at 624-633 shows a compositional bias: acidic residues; the sequence is SDNEEGDSSS. 2 stretches are compositionally biased toward low complexity: residues 646–668 and 722–732; these read HTNN…NHES and QSSSSSSSSTI. A compositionally biased stretch (acidic residues) spans 754–770; the sequence is NDDEDDNNNNNEDDNDD. The region spanning 897-953 is the HTH myb-type domain; sequence NVKLNQLKFTGGEDLLLLMGVKRFGTFNWRIIQKRYFPNKTDDQLFHRYKNLLSHSS. Residues 925 to 949 constitute a DNA-binding region (H-T-H motif); the sequence is WRIIQKRYFPNKTDDQLFHRYKNLL. Residues 959–1010 form the Myb-like 1 domain; the sequence is KQYLNGAKFTKEEEEKLDGAIKIHGLKWDIISRDYLHWKEPAMLKKFYEKRE. Low complexity-rich tracts occupy residues 1061–1118 and 1144–1160; these read NSTN…NENN and PIIE…ETSP. Disordered stretches follow at residues 1061 to 1122 and 1144 to 1168; these read NSTN…YEFG and PIIE…PCPI. Residues 1268–1316 form the Myb-like 2 domain; sequence KWTREEDRIILITVKEKGTVDNEIWKSLSDTKIQDKTPDQIMYRYLQLL.

The protein localises to the nucleus. In Dictyostelium discoideum (Social amoeba), this protein is Myb-like protein O (mybO).